The following is a 249-amino-acid chain: tRNA pseudouridine synthase A (249 aa).

Asp-53 serves as the catalytic Nucleophile. A substrate-binding site is contributed by Tyr-111.

This sequence belongs to the tRNA pseudouridine synthase TruA family. As to quaternary structure, homodimer.

It catalyses the reaction uridine(38/39/40) in tRNA = pseudouridine(38/39/40) in tRNA. Its function is as follows. Formation of pseudouridine at positions 38, 39 and 40 in the anticodon stem and loop of transfer RNAs. This chain is tRNA pseudouridine synthase A, found in Streptococcus mutans serotype c (strain ATCC 700610 / UA159).